Reading from the N-terminus, the 329-residue chain is Ketol-acid reductoisomerase (NADP(+)) (329 aa).

Residues Val-2–Thr-182 form the KARI N-terminal Rossmann domain. Residues Tyr-25–Gln-28, Ser-51, and Ser-53 each bind NADP(+). His-108 is an active-site residue. Gly-134 contacts NADP(+). Positions Thr-183–Ile-328 constitute a KARI C-terminal knotted domain. 4 residues coordinate Mg(2+): Asp-191, Glu-195, Glu-227, and Glu-231. Ser-252 lines the substrate pocket.

This sequence belongs to the ketol-acid reductoisomerase family. Mg(2+) is required as a cofactor.

It catalyses the reaction (2R)-2,3-dihydroxy-3-methylbutanoate + NADP(+) = (2S)-2-acetolactate + NADPH + H(+). It carries out the reaction (2R,3R)-2,3-dihydroxy-3-methylpentanoate + NADP(+) = (S)-2-ethyl-2-hydroxy-3-oxobutanoate + NADPH + H(+). It functions in the pathway amino-acid biosynthesis; L-isoleucine biosynthesis; L-isoleucine from 2-oxobutanoate: step 2/4. Its pathway is amino-acid biosynthesis; L-valine biosynthesis; L-valine from pyruvate: step 2/4. Involved in the biosynthesis of branched-chain amino acids (BCAA). Catalyzes an alkyl-migration followed by a ketol-acid reduction of (S)-2-acetolactate (S2AL) to yield (R)-2,3-dihydroxy-isovalerate. In the isomerase reaction, S2AL is rearranged via a Mg-dependent methyl migration to produce 3-hydroxy-3-methyl-2-ketobutyrate (HMKB). In the reductase reaction, this 2-ketoacid undergoes a metal-dependent reduction by NADPH to yield (R)-2,3-dihydroxy-isovalerate. This chain is Ketol-acid reductoisomerase (NADP(+)), found in Frankia casuarinae (strain DSM 45818 / CECT 9043 / HFP020203 / CcI3).